The chain runs to 189 residues: 7-methyl-GTP pyrophosphatase (189 aa).

Catalysis depends on aspartate 71, which acts as the Proton acceptor.

This sequence belongs to the Maf family. YceF subfamily. A divalent metal cation serves as cofactor.

The protein resides in the cytoplasm. The catalysed reaction is N(7)-methyl-GTP + H2O = N(7)-methyl-GMP + diphosphate + H(+). Functionally, nucleoside triphosphate pyrophosphatase that hydrolyzes 7-methyl-GTP (m(7)GTP). May have a dual role in cell division arrest and in preventing the incorporation of modified nucleotides into cellular nucleic acids. In Bdellovibrio bacteriovorus (strain ATCC 15356 / DSM 50701 / NCIMB 9529 / HD100), this protein is 7-methyl-GTP pyrophosphatase.